Here is a 116-residue protein sequence, read N- to C-terminus: Large ribosomal subunit protein bL20 (116 aa).

It belongs to the bacterial ribosomal protein bL20 family.

Functionally, binds directly to 23S ribosomal RNA and is necessary for the in vitro assembly process of the 50S ribosomal subunit. It is not involved in the protein synthesizing functions of that subunit. The protein is Large ribosomal subunit protein bL20 of Helicobacter pylori (strain G27).